A 58-amino-acid polypeptide reads, in one-letter code: Light-harvesting protein B-870 alpha chain (58 aa).

Residues 1–15 (MSKFYKIWLVFDPRR) lie on the Cytoplasmic side of the membrane. A helical transmembrane segment spans residues 16 to 36 (VFVAQGVFLFLLAVLIHLILL). Residue H32 participates in a bacteriochlorophyll binding. The Periplasmic portion of the chain corresponds to 37–58 (STPAFNWLTVATAKHGYVAAAQ).

This sequence belongs to the antenna complex alpha subunit family. As to quaternary structure, the core complex is formed by different alpha and beta chains, binding bacteriochlorophyll molecules, and arranged most probably in tetrameric structures disposed around the reaction center. The non-pigmented gamma chains may constitute additional components.

It is found in the cell inner membrane. Its function is as follows. Antenna complexes are light-harvesting systems, which transfer the excitation energy to the reaction centers. This Rhodobacter capsulatus (Rhodopseudomonas capsulata) protein is Light-harvesting protein B-870 alpha chain (pufA).